Here is a 790-residue protein sequence, read N- to C-terminus: Potassium transporter 22 (790 aa).

The Cytoplasmic portion of the chain corresponds to 1-64; the sequence is MAQQQGQGAG…HGEGWARTLR (64 aa). Residues 65 to 85 form a helical membrane-spanning segment; sequence LAFQCFGVLYGDIGTSPLYVY. Residues 86-98 are Extracellular-facing; that stretch reads STTFDGGIRHTDD. The helical transmembrane segment at 99-119 threads the bilayer; it reads LLGVLSLIIYSFLLFTIIKYV. Topologically, residues 120–198 are cytoplasmic; it reads YIALRANDDG…DLLENSRPVR (79 aa). The chain crosses the membrane as a helical span at residues 199 to 219; sequence ISLFLLTILATAMVISDACLT. Residues 220–236 lie on the Extracellular side of the membrane; it reads PAISVLSAVGGLKDKAP. The chain crosses the membrane as a helical span at residues 237–257; it reads HLNTEQVVWVTVGILVMLFAV. Over 258 to 264 the chain is Cytoplasmic; it reads QRFGTDK. The chain crosses the membrane as a helical span at residues 265-285; that stretch reads VGYLFAPVVLLWLLLIGGVGV. Residues 286–318 lie on the Extracellular side of the membrane; the sequence is YNLAAHDVGVLRAFNPKYILDYFRRNGRHGWVS. A helical membrane pass occupies residues 319–339; that stretch reads LGGVLLCFTGTEALFADLGCF. At 340–345 the chain is on the cytoplasmic side; the sequence is SIRSIQ. A helical membrane pass occupies residues 346–366; it reads LSFAFGLVPAVLLAYAGQAAY. The Extracellular portion of the chain corresponds to 367–385; that stretch reads LRVYPDHVGDAFYASTPQV. The helical transmembrane segment at 386–406 threads the bilayer; sequence LFWPTLVLALAASVVGSQAMI. Residues 407–437 are Cytoplasmic-facing; that stretch reads SCAFATISHSQAMGCFPRVKVVHTSRQYQGQ. A helical membrane pass occupies residues 438–458; sequence VYIPEINLLLGAAACVVTVAA. Over 459–469 the chain is Extracellular; the sequence is RDTVVIGEAHG. The chain crosses the membrane as a helical span at residues 470 to 490; that stretch reads ICVVLVMLITTLLLTVVMVLV. The Cytoplasmic portion of the chain corresponds to 491–492; sequence WR. Residues 493–513 form a helical membrane-spanning segment; the sequence is VNIGWVLVFACVFASTESVYL. Topologically, residues 514 to 519 are extracellular; sequence TSVLYK. A helical membrane pass occupies residues 520–540; sequence FAHGGYIPVAMSAVLMGVMGV. Over 541–790 the chain is Cytoplasmic; that stretch reads WHYVHVRRYK…LLKVGMSYEI (250 aa).

This sequence belongs to the HAK/KUP transporter (TC 2.A.72.3) family.

It localises to the membrane. In terms of biological role, high-affinity potassium transporter. This Oryza sativa subsp. japonica (Rice) protein is Potassium transporter 22 (HAK22).